We begin with the raw amino-acid sequence, 358 residues long: Photosystem II protein D1 (358 aa).

The next 3 membrane-spanning stretches (helical) occupy residues 29–46 (YVGW…AATI), 116–131 (HFLI…QWEL), and 140–154 (WICV…AATS). Chlorophyll a is bound at residue H116. Residue W124 coordinates pheophytin a. 2 residues coordinate [CaMn4O5] cluster: D168 and E187. Residues 195–216 (FHQLGVAGVFGGSLFCAMHGSL) form a helical membrane-spanning segment. Residue H196 participates in chlorophyll a binding. A quinone-binding positions include H213 and 262–263 (SF). Fe cation is bound at residue H213. A Fe cation-binding site is contributed by H270. The chain crosses the membrane as a helical span at residues 272-286 (FLAAWPVVCIWFTAL). Positions 330, 331, 340, and 342 each coordinate [CaMn4O5] cluster. Residues 343–358 (AGEVLPIALQSPAING) constitute a propeptide that is removed on maturation.

It belongs to the reaction center PufL/M/PsbA/D family. PSII is composed of 1 copy each of membrane proteins PsbA, PsbB, PsbC, PsbD, PsbE, PsbF, PsbH, PsbI, PsbJ, PsbK, PsbL, PsbM, PsbT, PsbX, PsbY, PsbZ, Psb30/Ycf12, peripheral proteins PsbO, CyanoQ (PsbQ), PsbU, PsbV and a large number of cofactors. It forms dimeric complexes. The cofactor is The D1/D2 heterodimer binds P680, chlorophylls that are the primary electron donor of PSII, and subsequent electron acceptors. It shares a non-heme iron and each subunit binds pheophytin, quinone, additional chlorophylls, carotenoids and lipids. D1 provides most of the ligands for the Mn4-Ca-O5 cluster of the oxygen-evolving complex (OEC). There is also a Cl(-1) ion associated with D1 and D2, which is required for oxygen evolution. The PSII complex binds additional chlorophylls, carotenoids and specific lipids.. Tyr-159 forms a radical intermediate that is referred to as redox-active TyrZ, YZ or Y-Z. Post-translationally, C-terminally processed by CtpA; processing is essential to allow assembly of the oxygen-evolving complex and thus photosynthetic growth.

Its subcellular location is the cellular thylakoid membrane. It catalyses the reaction 2 a plastoquinone + 4 hnu + 2 H2O = 2 a plastoquinol + O2. Photosystem II (PSII) is a light-driven water:plastoquinone oxidoreductase that uses light energy to abstract electrons from H(2)O, generating O(2) and a proton gradient subsequently used for ATP formation. It consists of a core antenna complex that captures photons, and an electron transfer chain that converts photonic excitation into a charge separation. The D1/D2 (PsbA/PsbD) reaction center heterodimer binds P680, the primary electron donor of PSII as well as several subsequent electron acceptors. The polypeptide is Photosystem II protein D1 (Mastigocladus laminosus (Fischerella sp.)).